Reading from the N-terminus, the 70-residue chain is DNA-directed RNA polymerase subunit epsilon (70 aa).

It belongs to the RNA polymerase subunit epsilon family. RNAP is composed of a core of 2 alpha, a beta and a beta' subunit. The core is associated with a delta subunit, and at least one of epsilon or omega. When a sigma factor is associated with the core the holoenzyme is formed, which can initiate transcription.

It catalyses the reaction RNA(n) + a ribonucleoside 5'-triphosphate = RNA(n+1) + diphosphate. Functionally, a non-essential component of RNA polymerase (RNAP). This Bacillus cereus (strain ZK / E33L) protein is DNA-directed RNA polymerase subunit epsilon.